A 367-amino-acid polypeptide reads, in one-letter code: Outer membrane protein assembly factor BamC (367 aa).

The signal sequence occupies residues 1 to 16 (MRLLPLFLMVTLAASG). C17 carries the N-palmitoyl cysteine lipid modification. C17 is lipidated: S-diacylglycerol cysteine.

This sequence belongs to the BamC family. As to quaternary structure, part of the Bam complex.

The protein localises to the cell outer membrane. Its function is as follows. Part of the outer membrane protein assembly complex, which is involved in assembly and insertion of beta-barrel proteins into the outer membrane. This Thiobacillus denitrificans (strain ATCC 25259 / T1) protein is Outer membrane protein assembly factor BamC.